Reading from the N-terminus, the 141-residue chain is Large ribosomal subunit protein uL16 (141 aa).

The protein belongs to the universal ribosomal protein uL16 family. Part of the 50S ribosomal subunit.

In terms of biological role, binds 23S rRNA and is also seen to make contacts with the A and possibly P site tRNAs. The chain is Large ribosomal subunit protein uL16 from Hydrogenobaculum sp. (strain Y04AAS1).